A 378-amino-acid chain; its full sequence is UDP-N-acetylglucosamine--N-acetylmuramyl-(pentapeptide) pyrophosphoryl-undecaprenol N-acetylglucosamine transferase (378 aa).

Residues 14–16 (TGG), Asn-125, Arg-165, Ser-193, and Gln-293 contribute to the UDP-N-acetyl-alpha-D-glucosamine site.

This sequence belongs to the glycosyltransferase 28 family. MurG subfamily.

It is found in the cell inner membrane. It carries out the reaction di-trans,octa-cis-undecaprenyl diphospho-N-acetyl-alpha-D-muramoyl-L-alanyl-D-glutamyl-meso-2,6-diaminopimeloyl-D-alanyl-D-alanine + UDP-N-acetyl-alpha-D-glucosamine = di-trans,octa-cis-undecaprenyl diphospho-[N-acetyl-alpha-D-glucosaminyl-(1-&gt;4)]-N-acetyl-alpha-D-muramoyl-L-alanyl-D-glutamyl-meso-2,6-diaminopimeloyl-D-alanyl-D-alanine + UDP + H(+). The protein operates within cell wall biogenesis; peptidoglycan biosynthesis. Cell wall formation. Catalyzes the transfer of a GlcNAc subunit on undecaprenyl-pyrophosphoryl-MurNAc-pentapeptide (lipid intermediate I) to form undecaprenyl-pyrophosphoryl-MurNAc-(pentapeptide)GlcNAc (lipid intermediate II). This Bartonella henselae (strain ATCC 49882 / DSM 28221 / CCUG 30454 / Houston 1) (Rochalimaea henselae) protein is UDP-N-acetylglucosamine--N-acetylmuramyl-(pentapeptide) pyrophosphoryl-undecaprenol N-acetylglucosamine transferase.